A 223-amino-acid polypeptide reads, in one-letter code: MCWAVGRRWAWAALLLAVAAVLAQVVWLWLGTQSFVFQHEEIAQLARQYAGLDHELAFSRLIVELRRLHPGHVLPDEDLQWVFVNAGGWMGAMCLLHASLSEYVLLFGTALGSSGHSGRYWAEISDTIISGTFHQWREGTTKSEVFYPGETVVHGPGEATAVEWGPNTWMVEYGRGVIPSTLGFALADTVFSTQDFLTLFYTLRAYARGLRLELTTYLFGQDA.

Residues 1–9 (MCWAVGRRW) are Lumenal-facing. The targeting to endoplasmic reticulum-associated lipid droplets stretch occupies residues 2–8 (CWAVGRR). Residues 10 to 30 (AWAALLLAVAAVLAQVVWLWL) form a helical membrane-spanning segment. At 31 to 223 (GTQSFVFQHE…LTTYLFGQDA (193 aa)) the chain is on the cytoplasmic side. The tract at residues 99–106 (SLSEYVLL) is important for ligand-binding. A C-terminal hydrophobic region region spans residues 177-223 (VIPSTLGFALADTVFSTQDFLTLFYTLRAYARGLRLELTTYLFGQDA).

Belongs to the ERG2 family. In terms of assembly, homotrimer. Forms a ternary complex with ANK2 and ITPR3. The complex is disrupted by agonists. Interacts with KCNA4. Interacts with KCNA2; cocaine consumption leads to increased interaction. Interacts with RNF112 in an oxidative stress-regulated manner.

The protein localises to the nucleus inner membrane. The protein resides in the nucleus outer membrane. Its subcellular location is the nucleus envelope. It localises to the cytoplasmic vesicle. It is found in the endoplasmic reticulum membrane. The protein localises to the membrane. The protein resides in the lipid droplet. Its subcellular location is the cell junction. It localises to the cell membrane. It is found in the cell projection. The protein localises to the growth cone. The protein resides in the postsynaptic density membrane. Functions in lipid transport from the endoplasmic reticulum and is involved in a wide array of cellular functions probably through regulation of the biogenesis of lipid microdomains at the plasma membrane. Involved in the regulation of different receptors it plays a role in BDNF signaling and EGF signaling. Also regulates ion channels like the potassium channel and could modulate neurotransmitter release. Plays a role in calcium signaling through modulation together with ANK2 of the ITP3R-dependent calcium efflux at the endoplasmic reticulum. Plays a role in several other cell functions including proliferation, survival and death. Originally identified for its ability to bind various psychoactive drugs it is involved in learning processes, memory and mood alteration. Necessary for proper mitochondrial axonal transport in motor neurons, in particular the retrograde movement of mitochondria. Plays a role in protecting cells against oxidative stress-induced cell death via its interaction with RNF112. In Bos taurus (Bovine), this protein is Sigma non-opioid intracellular receptor 1 (SIGMAR1).